A 150-amino-acid chain; its full sequence is Large ribosomal subunit protein uL22c (150 aa).

The protein belongs to the universal ribosomal protein uL22 family. As to quaternary structure, part of the 50S ribosomal subunit.

It is found in the plastid. In terms of biological role, this protein binds specifically to 23S rRNA. The globular domain of the protein is located near the polypeptide exit tunnel on the outside of the subunit, while an extended beta-hairpin is found that lines the wall of the exit tunnel in the center of the 70S ribosome. The sequence is that of Large ribosomal subunit protein uL22c (rpl22) from Orobanche minor (Small broomrape).